Reading from the N-terminus, the 639-residue chain is CTTNBP2 N-terminal-like protein (639 aa).

A coiled-coil region spans residues 87-285 (MKQCKNMQER…DLEASHQHSS (199 aa)). Phosphoserine occurs at positions 284 and 285. 3 disordered regions span residues 387-430 (VENG…PCSS), 463-490 (RHKF…LSPT), and 511-609 (RFTS…AASL). 2 stretches are compositionally biased toward low complexity: residues 407–430 (PSSG…PCSS) and 467–477 (QSQADQDQQAS). Residues Ser-481, Ser-488, Ser-523, Ser-527, Ser-560, Ser-563, and Ser-568 each carry the phosphoserine modification. The span at 511-529 (RFTSQQGPIKPVSPNSSPF) shows a compositional bias: polar residues. Residues Thr-570 and Thr-590 each carry the phosphothreonine modification. A compositionally biased stretch (low complexity) spans 587-600 (PGLTPSPSATTPLT). At Ser-592 the chain carries Phosphoserine.

In terms of assembly, interacts with CTTN/cortactin; this interaction may redistribute CTTN to stress fibers. May form homomers. Associates with the core of STRIPAK complexes composed of PP2A catalytic and scaffolding subunits, the striatins (PP2A regulatory subunits), the striatin-associated proteins MOB4, STRIP1 and STRIP2, PDCD10 and members of the STE20 kinases, such as STK24 and STK26.

The protein localises to the cell projection. It is found in the lamellipodium. The protein resides in the cytoplasm. Its subcellular location is the cytoskeleton. It localises to the stress fiber. In terms of biological role, regulates lamellipodial actin dynamics in a CTTN-dependent manner. Associates with core striatin-interacting phosphatase and kinase (STRIPAK) complex to form CTTNBP2NL-STRIPAK complexes. STRIPAK complexes have critical roles in protein (de)phosphorylation and are regulators of multiple signaling pathways including Hippo, MAPK, nuclear receptor and cytoskeleton remodeling. Different types of STRIPAK complexes are involved in a variety of biological processes such as cell growth, differentiation, apoptosis, metabolism and immune regulation. The chain is CTTNBP2 N-terminal-like protein (CTTNBP2NL) from Pongo abelii (Sumatran orangutan).